Consider the following 189-residue polypeptide: uncharacterized protein (189 aa).

Residues 1–19 form the signal peptide; sequence MKRVLFFLLMIFVSFGVIA.

This is an uncharacterized protein from Escherichia coli (strain K12).